A 299-amino-acid polypeptide reads, in one-letter code: Protease HtpX homolog (299 aa).

The next 2 membrane-spanning stretches (helical) occupy residues 15 to 35 (MFLT…VLWQ) and 37 to 57 (GVSY…QYYF). His140 contributes to the Zn(2+) binding site. Glu141 is an active-site residue. His144 is a binding site for Zn(2+). Helical transmembrane passes span 158-178 (FFAT…GAFG) and 187-207 (NNIM…YFLI). Glu215 lines the Zn(2+) pocket.

Belongs to the peptidase M48B family. Requires Zn(2+) as cofactor.

The protein localises to the cell membrane. The protein is Protease HtpX homolog of Moorella thermoacetica (strain ATCC 39073 / JCM 9320).